The chain runs to 682 residues: Potassium-transporting ATPase ATP-binding subunit (682 aa).

The next 4 membrane-spanning stretches (helical) occupy residues 34–54 (PVMFIVWIGSLLTTCISIAMA), 62–82 (ALFSAAISGWLWITVLFANFA), 219–239 (IALTILLIALTIVFLLATATL), and 254–274 (VLVALLVCLIPTTIGGLLSAI). Asp-307 functions as the 4-aspartylphosphate intermediate in the catalytic mechanism. ATP-binding positions include Asp-344, Glu-348, 377–384 (FTAQSRMS), and Lys-395. Positions 518 and 522 each coordinate Mg(2+). 3 consecutive transmembrane segments (helical) span residues 588–608 (FAIIPAAFAATYPQLNALNIM), 616–636 (AILSAVIFNALIIVFLIPLAL), and 656–676 (IYGLGGLLVPFIGIKVIDLLL).

Belongs to the cation transport ATPase (P-type) (TC 3.A.3) family. Type IA subfamily. As to quaternary structure, the system is composed of three essential subunits: KdpA, KdpB and KdpC.

The protein resides in the cell inner membrane. It carries out the reaction K(+)(out) + ATP + H2O = K(+)(in) + ADP + phosphate + H(+). Functionally, part of the high-affinity ATP-driven potassium transport (or Kdp) system, which catalyzes the hydrolysis of ATP coupled with the electrogenic transport of potassium into the cytoplasm. This subunit is responsible for energy coupling to the transport system and for the release of the potassium ions to the cytoplasm. The polypeptide is Potassium-transporting ATPase ATP-binding subunit (Escherichia coli (strain ATCC 8739 / DSM 1576 / NBRC 3972 / NCIMB 8545 / WDCM 00012 / Crooks)).